The sequence spans 475 residues: Ribulose bisphosphate carboxylase large chain (475 aa).

Residues 1-2 (MS) constitute a propeptide that is removed on maturation. The residue at position 3 (Pro3) is an N-acetylproline. N6,N6,N6-trimethyllysine is present on Lys14. Residues Asn123 and Thr173 each coordinate substrate. Catalysis depends on Lys175, which acts as the Proton acceptor. Lys177 provides a ligand contact to substrate. Residues Lys201, Asp203, and Glu204 each contribute to the Mg(2+) site. Residue Lys201 is modified to N6-carboxylysine. His294 functions as the Proton acceptor in the catalytic mechanism. Residues Arg295, His327, and Ser379 each contribute to the substrate site.

This sequence belongs to the RuBisCO large chain family. Type I subfamily. In terms of assembly, heterohexadecamer of 8 large chains and 8 small chains; disulfide-linked. The disulfide link is formed within the large subunit homodimers. The cofactor is Mg(2+). In terms of processing, the disulfide bond which can form in the large chain dimeric partners within the hexadecamer appears to be associated with oxidative stress and protein turnover.

The protein localises to the plastid. It localises to the chloroplast. The catalysed reaction is 2 (2R)-3-phosphoglycerate + 2 H(+) = D-ribulose 1,5-bisphosphate + CO2 + H2O. The enzyme catalyses D-ribulose 1,5-bisphosphate + O2 = 2-phosphoglycolate + (2R)-3-phosphoglycerate + 2 H(+). In terms of biological role, ruBisCO catalyzes two reactions: the carboxylation of D-ribulose 1,5-bisphosphate, the primary event in carbon dioxide fixation, as well as the oxidative fragmentation of the pentose substrate in the photorespiration process. Both reactions occur simultaneously and in competition at the same active site. The polypeptide is Ribulose bisphosphate carboxylase large chain (Cycas taitungensis (Prince sago)).